The chain runs to 669 residues: Threonine--tRNA ligase (669 aa).

A TGS domain is found at D3–T60. Residues D260–P566 are catalytic. The Zn(2+) site is built by C365, H416, and H543.

This sequence belongs to the class-II aminoacyl-tRNA synthetase family. In terms of assembly, homodimer. It depends on Zn(2+) as a cofactor.

Its subcellular location is the cytoplasm. The catalysed reaction is tRNA(Thr) + L-threonine + ATP = L-threonyl-tRNA(Thr) + AMP + diphosphate + H(+). Functionally, catalyzes the attachment of threonine to tRNA(Thr) in a two-step reaction: L-threonine is first activated by ATP to form Thr-AMP and then transferred to the acceptor end of tRNA(Thr). Also edits incorrectly charged L-seryl-tRNA(Thr). This chain is Threonine--tRNA ligase, found in Paenarthrobacter aurescens (strain TC1).